The chain runs to 384 residues: Lipid-A-disaccharide synthase (384 aa).

The protein belongs to the LpxB family.

The enzyme catalyses a lipid X + a UDP-2-N,3-O-bis[(3R)-3-hydroxyacyl]-alpha-D-glucosamine = a lipid A disaccharide + UDP + H(+). The protein operates within bacterial outer membrane biogenesis; LPS lipid A biosynthesis. Its function is as follows. Condensation of UDP-2,3-diacylglucosamine and 2,3-diacylglucosamine-1-phosphate to form lipid A disaccharide, a precursor of lipid A, a phosphorylated glycolipid that anchors the lipopolysaccharide to the outer membrane of the cell. In Geobacter metallireducens (strain ATCC 53774 / DSM 7210 / GS-15), this protein is Lipid-A-disaccharide synthase.